A 443-amino-acid chain; its full sequence is Zinc finger protein ZIC 1 (443 aa).

The segment at 221 to 256 adopts a C2H2-type 1; atypical zinc-finger fold; the sequence is LICKWIEPEQLANPKKSCNKTFSTMHELVTHVTVEH. The segment at 265–292 adopts a C2H2-type 2; atypical zinc-finger fold; sequence HICVWEECPREGKPFKAKYKLINHIRVH. 3 C2H2-type zinc fingers span residues 298 to 322, 328 to 352, and 358 to 380; these read FPCP…KRTH, FKCE…MHVH, and YLCK…MKVH. The segment at 371-433 is disordered; the sequence is SSLRKHMKVH…AVHHTSNHST (63 aa). Residues 383–396 are compositionally biased toward low complexity; that stretch reads SSQGSQPSPAASSG. Positions 397 to 413 are enriched in polar residues; the sequence is YESSTPPTIVSPSAENQ. Residues 408 to 443 are negatively regulates transcriptional activity; the sequence is PSAENQSTSSLSPSSSAVHHTSNHSTLSSNFNEWYV. Low complexity predominate over residues 414-433; the sequence is STSSLSPSSSAVHHTSNHST.

This sequence belongs to the GLI C2H2-type zinc-finger protein family. During early gastrula stages, widely expressed in the dorsal ectoderm. At mid-gastrula, expressed throughout the presumptive neural plate and at late gastrula, expression gradually diminishes in the dorsal midline and increases in the anterior folds. By early neurula stage, expression becomes restricted to the lateral edges of the neural plate, corresponding to the presumptive dorsal neural plate and neural crest, and in flanking ectoderm. In early tailbud stages (stages 22-23), expressed in the dorsal forebrain, midbrain and hindbrain. Subsequently expressed in the telencephalon and at the diencephalon/mesencephalon boundary. In the spinal cord, expression is restricted to the dorsal most region including the roof plate. Also expressed in the somites but not in eye vesicles. At larval stages, expressed mainly in the dorsal neural tube throughout its anteroposterior axis.

It is found in the nucleus. Its subcellular location is the cytoplasm. Transcriptional activator that induces expression of multiple genes including pax3, en2, snai2/slug, feb and a subset of wnt genes. Has multiple key roles in the regulation of neural induction and neurogenesis: acts as a neural competence factor, sensitizing the presumptive neuroectoderm to respond to subsequent neuralizing signals. Promotes both preplacodal cell fates and neural crest cell fates, two of the cell populations that arise from the neural plate border. Cooperates with pax3 in concert with wnt signaling to determine neural crest fate. Synergizes with the bmp-inhibitor noggin/nog and acts through the wnt pathway to induce expression of en2. May bind to the minimal GLI-consensus sequence 5'-TGGGTGGTC-3'. The protein is Zinc finger protein ZIC 1 (zic1) of Xenopus laevis (African clawed frog).